A 191-amino-acid polypeptide reads, in one-letter code: Probable DNA-directed RNA polymerase subunit delta (191 aa).

In terms of domain architecture, HTH HARE-type spans 14 to 83; that stretch reads LSMIEVARAI…GENKWGLRSW (70 aa). The tract at residues 118 to 191 is disordered; it reads DEDAIDYRDD…EDEEDEEPVL (74 aa).

It belongs to the RpoE family. As to quaternary structure, RNAP is composed of a core of 2 alpha, a beta and a beta' subunits. The core is associated with a delta subunit and one of several sigma factors.

Functionally, participates in both the initiation and recycling phases of transcription. In the presence of the delta subunit, RNAP displays an increased specificity of transcription, a decreased affinity for nucleic acids, and an increased efficiency of RNA synthesis because of enhanced recycling. This is Probable DNA-directed RNA polymerase subunit delta from Streptococcus pyogenes serotype M18 (strain MGAS8232).